Consider the following 727-residue polypeptide: Glucans biosynthesis glucosyltransferase H (727 aa).

Residues 18–41 (SAMPNERPGAMEPQKLSKMPEGFP) form a disordered region. 7 helical membrane passes run 58-78 (FLVV…MGAV), 97-117 (VNFC…LILL), 278-298 (LQQF…GWWV), 408-428 (IMAY…LMLA), 460-480 (LFYI…LLLL), 496-516 (IFSV…MMFI), and 572-592 (LLAW…ISAW).

The protein belongs to the glycosyltransferase 2 family. OpgH subfamily.

The protein resides in the cell inner membrane. It participates in glycan metabolism; osmoregulated periplasmic glucan (OPG) biosynthesis. Functionally, involved in the biosynthesis of osmoregulated periplasmic glucans (OPGs). The chain is Glucans biosynthesis glucosyltransferase H from Shewanella baltica (strain OS155 / ATCC BAA-1091).